A 442-amino-acid chain; its full sequence is MKMPKNNVYTVSRLNGEVRQLLEGELGKIWLNAEISNFAAPGSGHWYLTLKDNFAQIRSAMFKGRNRSVTFKPVNGQQVLVKGSISVYEPRGDYQLIIESMLPAGDGLLAQQYEALKMKLAAEGLFAADTKRPMPTNIQKIGVITSATGAAIKDVLHVLARRDSSIEVVIYPTQVQGDSASKSICKAIQTANARQEVDVLLLTRGGGSLEDLWCFNNEDLAHEIYNSALPIVSAVGHEVDTTISDYVADVRAPTPSAGAELLSGDAENKSEKLATFIARLKQSWQHYQLKTEQRSRSLENRLHRQDPKRKLEQFQQSFDEIQIRLNAALNDKLHKSTLQQQSLSYRLNQQSPQHRLTLESKHLDYLTARLNEGIKGKLNDVEMSLKNSAHQLETVSPLATLSRGYSITQDESGKVLLSSKDTQAGDTITTRLLDGEVKSTVI.

This sequence belongs to the XseA family. As to quaternary structure, heterooligomer composed of large and small subunits.

It localises to the cytoplasm. The catalysed reaction is Exonucleolytic cleavage in either 5'- to 3'- or 3'- to 5'-direction to yield nucleoside 5'-phosphates.. Its function is as follows. Bidirectionally degrades single-stranded DNA into large acid-insoluble oligonucleotides, which are then degraded further into small acid-soluble oligonucleotides. The protein is Exodeoxyribonuclease 7 large subunit of Shewanella sediminis (strain HAW-EB3).